The sequence spans 228 residues: Urease accessory protein UreF (228 aa).

This sequence belongs to the UreF family. In terms of assembly, ureD, UreF and UreG form a complex that acts as a GTP-hydrolysis-dependent molecular chaperone, activating the urease apoprotein by helping to assemble the nickel containing metallocenter of UreC. The UreE protein probably delivers the nickel.

It is found in the cytoplasm. Functionally, required for maturation of urease via the functional incorporation of the urease nickel metallocenter. The chain is Urease accessory protein UreF from Dechloromonas aromatica (strain RCB).